We begin with the raw amino-acid sequence, 362 residues long: Very-long-chain (3R)-3-hydroxyacyl-CoA dehydratase 3 (362 aa).

Met-1 is subject to N-acetylmethionine. Over Met-1 to Tyr-149 the chain is Cytoplasmic. The region spanning Val-5–Thr-94 is the CS domain. Thr-7 bears the Phosphothreonine mark. The stretch at Leu-111–Ser-138 forms a coiled coil. Ser-114 is modified (phosphoserine). Residues Leu-150 to Val-170 traverse the membrane as a helical segment. Residues Arg-171 to Asp-189 lie on the Lumenal side of the membrane. Residues Met-190–Thr-210 traverse the membrane as a helical segment. Residues Ser-211 to Thr-212 lie on the Cytoplasmic side of the membrane. A helical transmembrane segment spans residues Pro-213 to Gly-233. Residues Thr-234 to Ala-242 are Lumenal-facing. A helical transmembrane segment spans residues Val-243 to Met-263. Residues Leu-264–Thr-280 are Cytoplasmic-facing. A helical membrane pass occupies residues Met-281–Ile-301. Residues Tyr-286 and Glu-293 contribute to the active site. Over Pro-302–Val-322 the chain is Lumenal. Residues Arg-323 to Phe-343 traverse the membrane as a helical segment. At Arg-344 to His-362 the chain is on the cytoplasmic side.

This sequence belongs to the very long-chain fatty acids dehydratase HACD family. As to quaternary structure, may interact with enzymes of the ELO family (including ELOVL1); with those enzymes that mediate condensation, the first of the four steps of the reaction cycle responsible for fatty acids elongation, may be part of a larger fatty acids elongase complex. Interacts with RAC1. Associates with internalized insulin receptor/INSR complexes on Golgi/endosomal membranes; HACD3/PTPLAD1 together with ATIC and PRKAA2/AMPK2 is proposed to be part of a signaling network regulating INSR autophosphorylation and endocytosis.

It is found in the endoplasmic reticulum membrane. It catalyses the reaction a very-long-chain (3R)-3-hydroxyacyl-CoA = a very-long-chain (2E)-enoyl-CoA + H2O. It carries out the reaction (3R)-hydroxyhexadecanoyl-CoA = (2E)-hexadecenoyl-CoA + H2O. It functions in the pathway lipid metabolism; fatty acid biosynthesis. Functionally, catalyzes the third of the four reactions of the long-chain fatty acids elongation cycle. This endoplasmic reticulum-bound enzymatic process, allows the addition of two carbons to the chain of long- and very long-chain fatty acids/VLCFAs per cycle. This enzyme catalyzes the dehydration of the 3-hydroxyacyl-CoA intermediate into trans-2,3-enoyl-CoA, within each cycle of fatty acid elongation. Thereby, it participates in the production of VLCFAs of different chain lengths that are involved in multiple biological processes as precursors of membrane lipids and lipid mediators. Involved in Rac1-signaling pathways leading to the modulation of gene expression. Promotes insulin receptor/INSR autophosphorylation and is involved in INSR internalization. This Mus musculus (Mouse) protein is Very-long-chain (3R)-3-hydroxyacyl-CoA dehydratase 3.